The chain runs to 494 residues: Transcription factor SOX-9 (494 aa).

2 disordered regions span residues 1-66 and 159-275; these read MNLL…ESDE and ERLR…FRDV. Low complexity predominate over residues 27-42; it reads SDDSAGSPCPSGSGSD. 2 stretches are compositionally biased toward basic and acidic residues: residues 56 to 66 and 159 to 174; these read GDPDLKKESDE and ERLR…DYKY. The segment at 63-103 is dimerization (DIM); it reads ESDEDKFPVCIREAVSQVLKGYDWTLVPMPVRVNGSSKNKP. Residues 63–103 are PQA; that stretch reads ESDEDKFPVCIREAVSQVLKGYDWTLVPMPVRVNGSSKNKP. A Phosphoserine modification is found at serine 64. Positions 105-173 form a DNA-binding region, HMG box; it reads VKRPMNAFMV…QHKKDHPDYK (69 aa). Serine 181 bears the Phosphoserine mark. Residues 211–222 are compositionally biased toward low complexity; it reads SPQSSSSISEVH. Positions 224 to 309 are transactivation domain (TAM); the sequence is PGEHSGQSQG…LPPNGHPGVP (86 aa). 2 short sequence motifs (9aaTAD) span residues 277–286 and 292–300; these read IGELSSDVIS and DVNEFDQYL. Low complexity predominate over residues 326–337; it reads SSASSPAGAGHA. Residues 326–402 form a disordered region; the sequence is SSASSPAGAG…PQQQQQQQQQ (77 aa). The span at 344–353 shows a compositional bias: pro residues; the sequence is PQPPQPPAQP. A transactivation domain (TAC) region spans residues 372–494; that stretch reads RPHIKTEQLS…QPVYTQLTRP (123 aa). Lysine 376 participates in a covalent cross-link: Glycyl lysine isopeptide (Lys-Gly) (interchain with G-Cter in SUMO). Residues 378–387 are compositionally biased toward polar residues; that stretch reads EQLSPSHYSE. A compositionally biased stretch (low complexity) spans 388–402; that stretch reads QQQHSPQQQQQQQQQ. The 9aaTAD 3 motif lies at 445-453; sequence GGLYSTFTY. Residues 462-494 form a disordered region; that stretch reads YTPIADTSGVPSIPQTHSPQHWEQPVYTQLTRP. Residues 470-494 are compositionally biased toward polar residues; the sequence is GVPSIPQTHSPQHWEQPVYTQLTRP.

As to quaternary structure, interacts with SNAI2; triggers neural crest delamination in a phosphorylation dependent manner. Interacts with UBE2I. Phosphorylated at Ser-181 in the developing neural tube. Phosphorylation at either Ser-64 or Ser-181 is required for sumoylation, but phosphorylation is not dependent on sumoylation. Sumoylation is enhanced by PKA. Phosphorylation is required for interaction with SNAI2 to trigger neural crest delamination and for an efficient trunk neural crest delamination, whereas sumoylation plays a less significant role. Phosphorylation and sumoylation are induced by BMP signaling pathway. In terms of processing, sumoylated at Lys-376; phosphorylation at either Ser-64 or Ser-181 is required for sumoylation. Sumoylation is induced by BMP signaling pathway.

The protein localises to the nucleus. Functionally, transcription factor that plays a key role in chondrocytes differentiation and skeletal development. Specifically binds the 5'-ACAAAG-3' DNA motif present in enhancers and super-enhancers and promotes expression of genes important for chondrogenesis, including COL2A1. Plays a central role in successive steps of chondrocyte differentiation. Absolutely required for precartilaginous condensation, the first step in chondrogenesis during which skeletal progenitors differentiate into prechondrocytes. Together with SOX5 and SOX6, required for overt chondrogenesis when condensed prechondrocytes differentiate into early stage chondrocytes, the second step in chondrogenesis. Later, required to direct hypertrophic maturation and block osteoblast differentiation of growth plate chondrocytes: maintains chondrocyte columnar proliferation, delays prehypertrophy and then prevents osteoblastic differentiation of chondrocytes. Also required for chondrocyte hypertrophy, both indirectly, by keeping the lineage fate of chondrocytes, and directly, by remaining present in upper hypertrophic cells. Low lipid levels are the main nutritional determinant for chondrogenic commitment of skeletal progenitor cells: when lipids levels are low, FOXO transcription factors promote expression of SOX9, which induces chondrogenic commitment and suppresses fatty acid oxidation. In addition to cartilage development, also acts as a regulator of proliferation and differentiation in epithelial stem/progenitor cells. In response to bone morphogenetic protein stimulus, phosphorylation is induced and then sumoylation, allowing cooperation with SNAI2 to trigger neural crest delamination. This is Transcription factor SOX-9 from Gallus gallus (Chicken).